Consider the following 816-residue polypeptide: H(+)/Cl(-) exchange transporter 5 (816 aa).

Residues methionine 1–alanine 124 are Cytoplasmic-facing. 2 helical membrane-spanning segments follow: residues phenylalanine 125–glycine 162 and valine 208–phenylalanine 231. The Selectivity filter part_1 motif lies at glycine 237–proline 241. Residue serine 238 coordinates chloride. Residues isoleucine 240–leucine 247 constitute an intramembrane region (helical). The next 2 membrane-spanning stretches (helical) occupy residues leucine 256–glycine 275 and glutamate 281–asparagine 300. The Selectivity filter part_2 signature appears at glycine 279–proline 283. 2 consecutive intramembrane regions (helical) follow at residues valine 312–alanine 324 and proline 328–leucine 336. The next 5 helical transmembrane spans lie at leucine 348–asparagine 366, leucine 389–cysteine 414, leucine 422–phenylalanine 442, methionine 498–methionine 518, and glycine 523–glycine 542. A Selectivity filter part_3 motif is present at residues glycine 523 to proline 527. Phenylalanine 525 contributes to the chloride binding site. Positions glycine 570 to valine 584 form an intramembrane region, helical. The segment at residues threonine 585–methionine 587 is an intramembrane region (note=Loop between two helices). The segment at residues threonine 588–threonine 599 is an intramembrane region (helical). The note=Loop between two helices intramembrane region spans glycine 600 to tyrosine 604. The chain crosses the membrane as a helical span at residues isoleucine 605–leucine 622. Over glycine 623–asparagine 816 the chain is Cytoplasmic. Tyrosine 628 is a binding site for chloride. 2 CBS domains span residues methionine 656–lysine 720 and isoleucine 752–serine 812. ATP contacts are provided by residues threonine 666, tyrosine 687–glycine 689, and threonine 794–aspartate 797.

Belongs to the chloride channel (TC 2.A.49) family. ClC-5/CLCN5 subfamily. As to quaternary structure, interacts with NEDD4 and NEDD4L. Ubiquitinated by NEDD4L in the presence of albumin; which promotes endocytosis and proteasomal degradation. As to expression, kidney specific.

The protein resides in the golgi apparatus membrane. It localises to the endosome membrane. Its subcellular location is the cell membrane. The enzyme catalyses 2 chloride(in) + H(+)(out) = 2 chloride(out) + H(+)(in). Functionally, proton-coupled chloride transporter. Functions as antiport system and exchanges chloride ions against protons. Important for normal acidification of the endosome lumen. May play an important role in renal tubular function. The CLC channel family contains both chloride channels and proton-coupled anion transporters that exchange chloride or another anion for protons. The absence of conserved gating glutamate residues is typical for family members that function as channels. The chain is H(+)/Cl(-) exchange transporter 5 (Clcn5) from Mus musculus (Mouse).